The primary structure comprises 391 residues: G-patch domain-containing protein 1 (391 aa).

Residues Lys15–Pro61 form the G-patch domain. Disordered regions lie at residues Val80–Lys132 and Lys212–Arg307. 2 stretches are compositionally biased toward acidic residues: residues Asp92–Asp102 and Asn265–Lys295. A Nuclear localization signal motif is present at residues Ala305–Ile312.

As to expression, strongly expressed in tissues with high cell proliferation activity that have a high demand for ribosome production such as shoot tips, leaves primordia, root tips and floral buds.

The protein localises to the nucleus. Its subcellular location is the nucleolus. In terms of biological role, involved in ribosome biogenesis, required for normal progression of rRNA processing. Seems to promote cell proliferation in leaves. This Arabidopsis thaliana (Mouse-ear cress) protein is G-patch domain-containing protein 1.